A 977-amino-acid polypeptide reads, in one-letter code: Serine/threonine-protein kinase/endoribonuclease IRE1 (977 aa).

An N-terminal signal peptide occupies residues 1-18; that stretch reads MPARRLLLLLTLLLPGLG. The Lumenal segment spans residues 19–443; sequence IFGSTSTVTL…EAPVDSMLKD (425 aa). Asparagine 176 carries an N-linked (GlcNAc...) asparagine glycan. Residues 410 to 419 show a composition bias toward polar residues; the sequence is TSENAPTTVS. Positions 410–434 are disordered; sequence TSENAPTTVSRDVEEKPAHAPARPE. A helical transmembrane segment spans residues 444-464; the sequence is MATIILSTFLLIGWVAFIITY. Residues 465 to 977 are Cytoplasmic-facing; the sequence is PLSMHQQQQL…PQPPVTPDAL (513 aa). The tract at residues 491–559 is disordered; that stretch reads QQQQQLPFHP…PSLEQDDGDE (69 aa). Low complexity predominate over residues 513 to 552; that stretch reads TSGPYSESSGTSSPSTSPRASNHSLCSGSSASKAGSSPSL. Positions 571–832 constitute a Protein kinase domain; the sequence is FCPKDVLGHG…AKHVLKHPFF (262 aa). Residues 577 to 585, lysine 599, and 643 to 645 each bind ATP; these read LGHGAEGTI and ELC. The active-site Proton acceptor is the aspartate 688. ATP contacts are provided by residues 690-693 and aspartate 711; that span reads KPHN. Residues serine 724 and serine 729 each carry the phosphoserine modification. Residues 835–963 form the KEN domain; it reads LEKQLQFFQD…ERLFQPYYFH (129 aa). Positions 906 to 907 are interacts with hydroxy-aryl-aldehyde inhibitors; it reads NK. At threonine 973 the chain carries Phosphothreonine.

It belongs to the protein kinase superfamily. Ser/Thr protein kinase family. In terms of assembly, monomer. Homodimer; disulfide-linked; homodimerization takes place in response to endoplasmic reticulum stress and promotes activation of the kinase and endoribonuclease activities. Dimer formation is driven by hydrophobic interactions within the N-terminal luminal domains and stabilized by disulfide bridges. Interacts (via the luminal region) with DNAJB9/ERdj4; interaction takes place in unstressed cells and promotes recruitment of HSPA5/BiP. Interacts (via the luminal region) with HSPA5/BiP; HSPA5/BiP is a negative regulator of the unfolded protein response (UPR) that prevents homodimerization of ERN1/IRE1 and subsequent activation of the protein. Interaction with HSPA5 also competitively inhibits ERN1 interaction with MANF. Interacts with PDIA6, a negative regulator of the UPR; the interaction is direct and disrupts homodimerization. Interacts with DAB2IP (via PH domain); the interaction occurs in a endoplasmic reticulum stress-induced dependent manner and is required for subsequent recruitment of TRAF2 to ERN1/IRE1. Interacts with TAOK3 and TRAF2. Interacts with RNF13. Interacts with LACC1. Interacts (when unphosphorylated) with DDRGK1; interaction is dependent on UFM1 and takes place in response to endoplasmic reticulum stress, regulating ERN1/IRE1-alpha stability. Interacts (via N-terminus) with P4HB/PDIA1; the interaction is enhanced by phosphorylation of P4HB by FAM20C in response to endoplasmic reticulum stress and results in attenuation of ERN1 activity. Interacts with TMBIM6; this interaction inhibits ERN1 activity. Interacts (via luminal domain) with MANF (via C-terminus); the interaction is decreased in the presence of increasing concentrations of Ca(2+). Requires Mg(2+) as cofactor. Autophosphorylated following homodimerization. Autophosphorylation promotes activation of the endoribonuclease domain. In response to ER stress, phosphorylated at Ser-724, Ser-729 and possibly Ser-726; phosphorylation promotes oligomerization and endoribonuclease activity. Dephosphorylated at Ser-724, Ser-729 and possibly Ser-726 by RPAP2 to abort failed ER-stress adaptation and trigger apoptosis. Phosphorylated at Ser-724; in response to the ER stressor tunicamycin. In terms of processing, ADP-ribosylated by PARP16 upon ER stress, which increases both kinase and endonuclease activities. In terms of tissue distribution, ubiquitously expressed. High levels observed in pancreatic tissue.

The protein resides in the endoplasmic reticulum membrane. It catalyses the reaction L-seryl-[protein] + ATP = O-phospho-L-seryl-[protein] + ADP + H(+). The enzyme catalyses L-threonyl-[protein] + ATP = O-phospho-L-threonyl-[protein] + ADP + H(+). Its activity is regulated as follows. The kinase domain is activated by trans-autophosphorylation following homodimerization. Kinase activity is required for activation of the endoribonuclease domain. Endoribonuclease activity is specifically inhibited by hydroxy-aryl-aldehydes (HAA). Serine/threonine-protein kinase and endoribonuclease that acts as a key sensor for the endoplasmic reticulum unfolded protein response (UPR). In unstressed cells, the endoplasmic reticulum luminal domain is maintained in its inactive monomeric state by binding to the endoplasmic reticulum chaperone HSPA5/BiP. Accumulation of misfolded proteins in the endoplasmic reticulum causes release of HSPA5/BiP, allowing the luminal domain to homodimerize, promoting autophosphorylation of the kinase domain and subsequent activation of the endoribonuclease activity. The endoribonuclease activity is specific for XBP1 mRNA and excises 26 nucleotides from XBP1 mRNA. The resulting spliced transcript of XBP1 encodes a transcriptional activator protein that up-regulates expression of UPR target genes. Acts as an upstream signal for ER stress-induced GORASP2-mediated unconventional (ER/Golgi-independent) trafficking of CFTR to cell membrane by modulating the expression and localization of SEC16A. The chain is Serine/threonine-protein kinase/endoribonuclease IRE1 from Homo sapiens (Human).